Here is a 324-residue protein sequence, read N- to C-terminus: Methionyl-tRNA formyltransferase (324 aa).

114–117 is a (6S)-5,6,7,8-tetrahydrofolate binding site; it reads SLLP.

It belongs to the Fmt family.

The catalysed reaction is L-methionyl-tRNA(fMet) + (6R)-10-formyltetrahydrofolate = N-formyl-L-methionyl-tRNA(fMet) + (6S)-5,6,7,8-tetrahydrofolate + H(+). In terms of biological role, attaches a formyl group to the free amino group of methionyl-tRNA(fMet). The formyl group appears to play a dual role in the initiator identity of N-formylmethionyl-tRNA by promoting its recognition by IF2 and preventing the misappropriation of this tRNA by the elongation apparatus. The protein is Methionyl-tRNA formyltransferase of Phocaeicola vulgatus (strain ATCC 8482 / DSM 1447 / JCM 5826 / CCUG 4940 / NBRC 14291 / NCTC 11154) (Bacteroides vulgatus).